The primary structure comprises 326 residues: Meiotically up-regulated gene 113 protein (326 aa).

It is found in the cytoplasm. Functionally, has a role in meiosis. The chain is Meiotically up-regulated gene 113 protein (mug113) from Schizosaccharomyces pombe (strain 972 / ATCC 24843) (Fission yeast).